A 580-amino-acid chain; its full sequence is Acyl-coenzyme A synthetase ACSM3, mitochondrial (580 aa).

The transit peptide at 1-21 (MVMLLRARCFQRLAIPDPMRV) directs the protein to the mitochondrion. N6-succinyllysine is present on residues Lys67 and Lys100. Lys151 carries the post-translational modification N6-acetyllysine. Residues 229–237 (TSGTTGPPK), 368–373 (EGYGQT), Asp455, Arg470, and Lys566 each bind ATP.

It belongs to the ATP-dependent AMP-binding enzyme family. Requires Mg(2+) as cofactor. Mn(2+) serves as cofactor. In terms of tissue distribution, detected in kidney (at protein level). Detected in kidney proximal tubules and in liver. Detected at low levels in testis, stomach, heart and lung.

It is found in the mitochondrion. It localises to the mitochondrion matrix. It catalyses the reaction a medium-chain fatty acid + ATP + CoA = a medium-chain fatty acyl-CoA + AMP + diphosphate. The catalysed reaction is propanoate + ATP + CoA = propanoyl-CoA + AMP + diphosphate. It carries out the reaction butanoate + ATP + CoA = butanoyl-CoA + AMP + diphosphate. The enzyme catalyses 2-methylpropanoate + ATP + CoA = 2-methylpropanoyl-CoA + AMP + diphosphate. It catalyses the reaction 2-methylbutanoate + ATP + CoA = 2-methylbutanoyl-CoA + AMP + diphosphate. The catalysed reaction is octanoate + ATP + CoA = octanoyl-CoA + AMP + diphosphate. Functionally, catalyzes the activation of fatty acids by CoA to produce an acyl-CoA, the first step in fatty acid metabolism. Capable of activating medium-chain fatty acids with a preference for isobutyrate among fatty acids with 2-6 carbon atoms. The polypeptide is Acyl-coenzyme A synthetase ACSM3, mitochondrial (Acsm3) (Mus musculus (Mouse)).